We begin with the raw amino-acid sequence, 613 residues long: Ectonucleoside triphosphate diphosphohydrolase 4 (613 aa).

Topologically, residues 1–33 are cytoplasmic; that stretch reads MGRIGISCLFPASWHFSISPVGCPRILNTNLRQ. Residues 34 to 54 form a helical membrane-spanning segment; sequence IVVISILAAAVSLLYFSVVII. The Lumenal segment spans residues 55–559; it reads RSKYGWLSKD…AGHAHWRGVS (505 aa). Residue Glu-222 is the Proton acceptor of the active site. Cys-368 and Cys-395 form a disulfide bridge. 2 N-linked (GlcNAc...) asparagine glycosylation sites follow: Asn-404 and Asn-407. Cys-461 and Cys-490 are disulfide-bonded. A helical transmembrane segment spans residues 560-580; sequence FVYNHYLFSGCFLVVLLSILL. Topologically, residues 581 to 613 are cytoplasmic; it reads YLLRLRRIHRRAPRTGSLWMEEGLPSQKGPGPL.

It belongs to the GDA1/CD39 NTPase family. Requires Ca(2+) as cofactor. It depends on Mg(2+) as a cofactor. In terms of tissue distribution, ubiquitous.

The protein resides in the cytoplasmic vesicle. It localises to the autophagosome membrane. It is found in the lysosome membrane. Its subcellular location is the golgi apparatus membrane. It catalyses the reaction a ribonucleoside 5'-triphosphate + H2O = a ribonucleoside 5'-diphosphate + phosphate + H(+). It carries out the reaction a ribonucleoside 5'-diphosphate + H2O = a ribonucleoside 5'-phosphate + phosphate + H(+). The catalysed reaction is UDP + H2O = UMP + phosphate + H(+). The enzyme catalyses UTP + H2O = UDP + phosphate + H(+). It catalyses the reaction CTP + H2O = CDP + phosphate + H(+). It carries out the reaction GDP + H2O = GMP + phosphate + H(+). The catalysed reaction is 5-methyl-UTP + H2O = 5-methyl-UDP + phosphate + H(+). In terms of biological role, catalyzes the hydrolysis of nucleoside triphosphates and diphosphates in a calcium- or magnesium-dependent manner, with a preference for pyrimidines. Preferentially hydrolyzes UTP and TTP on UTP and TTP. AMP, ADP, ATP and UMP are not substrates. Preferentially activated by Ca(2+) over Mg(2+). Its function is as follows. Has a broad substrate specificity with the ability of cleaving all nucleotide di- and triphosphates with the exception of adenosine di- and triphosphate (ADP and ATP). Preferentially hydrolyzes CTP, UDP, CDP, GTP and GDP. Can use either Ca(2+) or Mg(2+) equally. The chain is Ectonucleoside triphosphate diphosphohydrolase 4 (Entpd4) from Mus musculus (Mouse).